Consider the following 566-residue polypeptide: Arginine--tRNA ligase (566 aa).

The short motif at 123–133 (PNVAKPFHVGH) is the 'HIGH' region element.

This sequence belongs to the class-I aminoacyl-tRNA synthetase family. As to quaternary structure, monomer.

The protein resides in the cytoplasm. It carries out the reaction tRNA(Arg) + L-arginine + ATP = L-arginyl-tRNA(Arg) + AMP + diphosphate. The sequence is that of Arginine--tRNA ligase from Alkaliphilus metalliredigens (strain QYMF).